Here is a 187-residue protein sequence, read N- to C-terminus: UPF0301 protein VSAL_I0547 (187 aa).

The protein belongs to the UPF0301 (AlgH) family.

This Aliivibrio salmonicida (strain LFI1238) (Vibrio salmonicida (strain LFI1238)) protein is UPF0301 protein VSAL_I0547.